The sequence spans 472 residues: Methanethiol oxidase (472 aa).

N-acetylalanine is present on Ala2. Phosphoserine occurs at positions 111, 371, and 467.

Belongs to the selenium-binding protein family. Interacts with USP33. Phosphorylated. In terms of processing, the N-terminus is blocked. Widely expressed. Highly expressed in liver, lung, colon, prostate, kidney and pancreas. In brain, present both in neurons and glia (at protein level). Down-regulated in lung adenocarcinoma, colorectal carcinoma and ovarian cancer. Two-fold up-regulated in brain and blood from schizophrenia patients.

The protein localises to the nucleus. Its subcellular location is the cytoplasm. It is found in the cytosol. It localises to the membrane. The catalysed reaction is methanethiol + O2 + H2O = hydrogen sulfide + formaldehyde + H2O2 + H(+). Its pathway is organosulfur degradation. In terms of biological role, catalyzes the oxidation of methanethiol, an organosulfur compound known to be produced in substantial amounts by gut bacteria. Selenium-binding protein which may be involved in the sensing of reactive xenobiotics in the cytoplasm. May be involved in intra-Golgi protein transport. This Homo sapiens (Human) protein is Methanethiol oxidase (SELENBP1).